The following is a 377-amino-acid chain: Hsc70-interacting protein 2 (377 aa).

Positions A68–V123 are disordered. S80 is modified (phosphoserine). A compositionally biased stretch (acidic residues) spans P89–S105. TPR repeat units lie at residues A126–N159, L161–L193, and A195–E227. The stretch at N239–H276 forms a coiled coil. The span at I243–N277 shows a compositional bias: basic and acidic residues. 2 disordered regions span residues I243–G302 and D344–D377. Over residues G282–G293 the composition is skewed to gly residues. The region spanning N294–I336 is the STI1 domain. Residues K355–A369 are compositionally biased toward basic and acidic residues.

Belongs to the FAM10 family. Homotetramer. Interacts with Hsc70 as well as DNAJ homologs and Hsp90.

It is found in the cytoplasm. In terms of biological role, one HIP oligomer binds the ATPase domains of at least two Hsc70 molecules dependent on activation of the Hsc70 ATPase by Hsp40. Stabilizes the ADP state of Hsc70 that has a high affinity for substrate protein. Through its own chaperone activity, it may contribute to the interaction of Hsc70 with various target proteins. This is Hsc70-interacting protein 2 from Drosophila melanogaster (Fruit fly).